A 331-amino-acid polypeptide reads, in one-letter code: Mitochondrial glycine transporter (331 aa).

Solcar repeat units lie at residues 19–103 (SRTT…LRQG), 132–216 (LSNW…LKRR), and 234–318 (SSSS…LILR). A run of 6 helical transmembrane segments spans residues 25–50 (FAAGLCSGLTSSILLQPADLLKTRVQ), 78–104 (GTLPSALRTGFGSALYFTSLNALRQGL), 138–163 (LATGAVARTAAGFVMMPVTVLKVRYE), 191–214 (GFGATAARDAPYAGLYVLFYEQLK), 238–264 (INFVSGGLAAGLATAITNPFDAVKTRL), and 293–311 (GLGLRITRKALSSALAWTV).

This sequence belongs to the mitochondrial carrier (TC 2.A.29) family. SLC25A38 subfamily.

The protein resides in the mitochondrion inner membrane. It catalyses the reaction glycine(in) = glycine(out). Its function is as follows. Mitochondrial glycine transporter that imports glycine into the mitochondrial matrix. Plays an important role in providing glycine for the first enzymatic step in heme biosynthesis, the condensation of glycine with succinyl-CoA to produce 5-aminolevulinate (ALA) in the mitochondrial matrix. The polypeptide is Mitochondrial glycine transporter (Neosartorya fischeri (strain ATCC 1020 / DSM 3700 / CBS 544.65 / FGSC A1164 / JCM 1740 / NRRL 181 / WB 181) (Aspergillus fischerianus)).